Here is a 938-residue protein sequence, read N- to C-terminus: Isoleucine--tRNA ligase (938 aa).

The 'HIGH' region signature appears at 58-68 (PYANGNIHMGH). An L-isoleucyl-5'-AMP-binding site is contributed by glutamate 566. The short motif at 607 to 611 (KMSKS) is the 'KMSKS' region element. Lysine 610 is a binding site for ATP. Positions 906, 909, 926, and 929 each coordinate Zn(2+).

This sequence belongs to the class-I aminoacyl-tRNA synthetase family. IleS type 1 subfamily. Monomer. Zn(2+) serves as cofactor.

It is found in the cytoplasm. It catalyses the reaction tRNA(Ile) + L-isoleucine + ATP = L-isoleucyl-tRNA(Ile) + AMP + diphosphate. Catalyzes the attachment of isoleucine to tRNA(Ile). As IleRS can inadvertently accommodate and process structurally similar amino acids such as valine, to avoid such errors it has two additional distinct tRNA(Ile)-dependent editing activities. One activity is designated as 'pretransfer' editing and involves the hydrolysis of activated Val-AMP. The other activity is designated 'posttransfer' editing and involves deacylation of mischarged Val-tRNA(Ile). This chain is Isoleucine--tRNA ligase, found in Nitratidesulfovibrio vulgaris (strain ATCC 29579 / DSM 644 / CCUG 34227 / NCIMB 8303 / VKM B-1760 / Hildenborough) (Desulfovibrio vulgaris).